An 87-amino-acid polypeptide reads, in one-letter code: Long neurotoxin homolog (87 aa).

Positions 1 to 21 (MKTLLLTLVVVTIVCLDLGYT) are cleaved as a signal peptide. 5 disulfide bridges follow: Cys-24–Cys-47, Cys-27–Cys-32, Cys-40–Cys-64, Cys-68–Cys-80, and Cys-81–Cys-86.

As to expression, expressed by the venom gland.

Its subcellular location is the secreted. In terms of biological role, inhibits carbachol-induced muscle contraction in a reversible manner. The chain is Long neurotoxin homolog from Bungarus multicinctus (Many-banded krait).